Here is a 338-residue protein sequence, read N- to C-terminus: Secretory carrier-associated membrane protein 1 (338 aa).

Residues 1–63 (MSDFDSNPFA…PNVPSTQPAI (63 aa)) are disordered. S2 carries the N-acetylserine modification. A Phosphoserine modification is found at S2. The Cytoplasmic portion of the chain corresponds to 2–155 (SDFDSNPFAD…QKTVKIMYYL (154 aa)). T45 carries the post-translational modification Phosphothreonine. The chain crosses the membrane as a helical span at residues 156–176 (WMFHAVTLFLNIFGCLAWFCV). Topologically, residues 177-181 (DPSRG) are lumenal. The helical transmembrane segment at 182–202 (VDFGLSILWFLLFTPCSFVCW) threads the bilayer. Topologically, residues 203–217 (YRPLYGAFRSDSSFR) are cytoplasmic. The chain crosses the membrane as a helical span at residues 218-238 (FFVFFFVYICQFAVHVLQAAG). The Lumenal portion of the chain corresponds to 239–261 (FHNWGNCGWISSLTGLNQSIPVG). A helical membrane pass occupies residues 262–282 (IMMIIIAALFTASAVISLVMF). The Cytoplasmic portion of the chain corresponds to 283 to 338 (KKVHGLYRTTGASFEKAQQEFATGVMSNKTVQTAAANAASTAATSAAQNAFKGNQI).

The protein belongs to the SCAMP family. As to quaternary structure, interacts with SYNRG, ITSN1 and SLC9A7.

The protein localises to the golgi apparatus. Its subcellular location is the trans-Golgi network membrane. It is found in the recycling endosome membrane. Functions in post-Golgi recycling pathways. Acts as a recycling carrier to the cell surface. The chain is Secretory carrier-associated membrane protein 1 (SCAMP1) from Sus scrofa (Pig).